A 346-amino-acid chain; its full sequence is N-acetyl-gamma-glutamyl-phosphate reductase (346 aa).

Residue Cys-149 is part of the active site.

The protein belongs to the NAGSA dehydrogenase family. Type 1 subfamily.

Its subcellular location is the cytoplasm. The catalysed reaction is N-acetyl-L-glutamate 5-semialdehyde + phosphate + NADP(+) = N-acetyl-L-glutamyl 5-phosphate + NADPH + H(+). It participates in amino-acid biosynthesis; L-arginine biosynthesis; N(2)-acetyl-L-ornithine from L-glutamate: step 3/4. In terms of biological role, catalyzes the NADPH-dependent reduction of N-acetyl-5-glutamyl phosphate to yield N-acetyl-L-glutamate 5-semialdehyde. In Citrifermentans bemidjiense (strain ATCC BAA-1014 / DSM 16622 / JCM 12645 / Bem) (Geobacter bemidjiensis), this protein is N-acetyl-gamma-glutamyl-phosphate reductase.